The following is a 497-amino-acid chain: Catalase-2 (497 aa).

Catalysis depends on residues histidine 71 and asparagine 144. Residue tyrosine 354 coordinates heme.

Belongs to the catalase family. Heme is required as a cofactor.

The catalysed reaction is 2 H2O2 = O2 + 2 H2O. In terms of biological role, catalase involved in the oxidative stress response serving to protect cells from toxicity. For instance plays a role in defending against oxidative damage induced by excessive copper stress. Not required for maintaining normal lifespan. The protein is Catalase-2 of Caenorhabditis elegans.